The sequence spans 267 residues: Phosphate import ATP-binding protein PstB 2 (267 aa).

Residues 21–262 (LATKDLHVYY…AQCQSTNDYV (242 aa)) form the ABC transporter domain. Residue 53 to 60 (GPSGCGKS) participates in ATP binding.

The protein belongs to the ABC transporter superfamily. Phosphate importer (TC 3.A.1.7) family. The complex is composed of two ATP-binding proteins (PstB), two transmembrane proteins (PstC and PstA) and a solute-binding protein (PstS).

The protein localises to the cell membrane. It catalyses the reaction phosphate(out) + ATP + H2O = ADP + 2 phosphate(in) + H(+). In terms of biological role, part of the ABC transporter complex PstSACB involved in phosphate import. Responsible for energy coupling to the transport system. The polypeptide is Phosphate import ATP-binding protein PstB 2 (Streptococcus pyogenes serotype M1).